A 375-amino-acid chain; its full sequence is Ubl carboxyl-terminal hydrolase 18 (375 aa).

Residues 18–45 (ESPQSPADLEEKKEEDSNMKREQPRERP) are disordered. Residues 26–45 (LEEKKEEDSNMKREQPRERP) are compositionally biased toward basic and acidic residues. A USP domain is found at 55–373 (VGLHNIGQTC…TAYLLVYMKM (319 aa)). The Nucleophile role is filled by Cys64. His321 acts as the Proton acceptor in catalysis.

Belongs to the peptidase C19 family. Interacts with STAT2; the interaction is direct. Interacts with IFNAR2; indirectly via STAT2, it negatively regulates the assembly of the ternary interferon-IFNAR1-IFNAR2 complex and inhibits type I interferon signaling. Interacts with STING1. Interacts with USP20.

The catalysed reaction is Thiol-dependent hydrolysis of ester, thioester, amide, peptide and isopeptide bonds formed by the C-terminal Gly of ubiquitin (a 76-residue protein attached to proteins as an intracellular targeting signal).. Interferon-induced ISG15-specific protease that plays a crucial role for maintaining a proper balance of ISG15-conjugated proteins in cells. Regulates protein ISGylation by efficiently cleaving ISG15 conjugates linked via isopeptide bonds. Regulates T-cell activation and T-helper 17 (Th17) cell differentiation by deubiquitinating TAK1, likely to keep TAK1-TAB complexes in steady conditions. In turn, restricts activation of NF-kappa-B, NFAT, and JNK as well as expression of IL2 in T-cells after TCR activation. Acts as a molecular adapter with USP20 to promote innate antiviral response through deubiquitinating STING1. Involved also in the negative regulation of the inflammatory response triggered by type I interferon. Upon recruitment by STAT2 to the type I interferon receptor subunit IFNAR2 interferes with the assembly of the ternary interferon-IFNAR1-IFNAR2 complex and acts as a negative regulator of the type I interferon signaling pathway. The sequence is that of Ubl carboxyl-terminal hydrolase 18 (USP18) from Pongo abelii (Sumatran orangutan).